A 355-amino-acid polypeptide reads, in one-letter code: NADH dehydrogenase [ubiquinone] 1 alpha subcomplex subunit 10, mitochondrial (355 aa).

The N-terminal 35 residues, 1-35 (MALRLLRLVPASASARGLAAGAQRVGRIHTSVHCK), are a transit peptide targeting the mitochondrion. Lys-122 carries the post-translational modification N6-acetyllysine; alternate. An N6-succinyllysine; alternate modification is found at Lys-122. The residue at position 250 (Ser-250) is a Phosphoserine; by PINK1. Lys-285 is modified (N6-succinyllysine).

Belongs to the complex I NDUFA10 subunit family. In terms of assembly, complex I is composed of 45 different subunits. This a component of the hydrophobic protein fraction. FAD serves as cofactor. Phosphorylation at Ser-250 by PINK1 is required for the binding and/or reduction of the complex I substrate ubiquinone. As to expression, expressed in the head and flagellum of epididymal sperm but not in testicular sperm (at protein level).

Its subcellular location is the mitochondrion matrix. In terms of biological role, accessory subunit of the mitochondrial membrane respiratory chain NADH dehydrogenase (Complex I), that is believed not to be involved in catalysis. Complex I functions in the transfer of electrons from NADH to the respiratory chain. The immediate electron acceptor for the enzyme is believed to be ubiquinone. The sequence is that of NADH dehydrogenase [ubiquinone] 1 alpha subcomplex subunit 10, mitochondrial (Ndufa10) from Rattus norvegicus (Rat).